Reading from the N-terminus, the 673-residue chain is DNA ligase (673 aa).

NAD(+)-binding positions include 35–39 (DAQYD), 84–85 (SL), and E115. K117 serves as the catalytic N6-AMP-lysine intermediate. The NAD(+) site is built by R138, E178, K294, and K318. Zn(2+) contacts are provided by C412, C415, C430, and C435. A BRCT domain is found at 594-673 (LQSDRLAGKS…DELHALLVDE (80 aa)).

It belongs to the NAD-dependent DNA ligase family. LigA subfamily. Mg(2+) serves as cofactor. The cofactor is Mn(2+).

The enzyme catalyses NAD(+) + (deoxyribonucleotide)n-3'-hydroxyl + 5'-phospho-(deoxyribonucleotide)m = (deoxyribonucleotide)n+m + AMP + beta-nicotinamide D-nucleotide.. DNA ligase that catalyzes the formation of phosphodiester linkages between 5'-phosphoryl and 3'-hydroxyl groups in double-stranded DNA using NAD as a coenzyme and as the energy source for the reaction. It is essential for DNA replication and repair of damaged DNA. This is DNA ligase from Herpetosiphon aurantiacus (strain ATCC 23779 / DSM 785 / 114-95).